The following is a 535-amino-acid chain: Butyrophilin-like protein 9 (535 aa).

The first 34 residues, 1–34, serve as a signal peptide directing secretion; sequence MVDLSVSPDSLKPVSLTSSLVFLMHLLLLQPGEP. The Extracellular portion of the chain corresponds to 35 to 256; it reads SSEVKVLGPE…VFVPGASAWK (222 aa). Residues 54-135 form the Ig-like V-type domain; it reads EVEFPCHLWP…SDKGTYGCRF (82 aa). Cys59 and Cys133 are oxidised to a cystine. N-linked (GlcNAc...) asparagine glycosylation is found at Asn102, Asn139, and Asn224. The helical transmembrane segment at 257–277 threads the bilayer; the sequence is SAFVATLPLLLVLAALALGVL. Residues 276–315 adopt a coiled-coil conformation; it reads VLRKQRRSREKLRKQAEKRQEKLTAELEKLQTELDWRRAE. The Cytoplasmic portion of the chain corresponds to 278–535; it reads RKQRRSREKL…EPADPALDWW (258 aa). Residues 310–509 form the B30.2/SPRY domain; the sequence is DWRRAEGQAE…LTICPLPVRG (200 aa). The segment at 340–367 is disordered; it reads SLEVSEDGKSVSSRGAPPGPAPGHPQRF.

This sequence belongs to the immunoglobulin superfamily. BTN/MOG family.

The protein resides in the membrane. The protein is Butyrophilin-like protein 9 (BTNL9) of Homo sapiens (Human).